The primary structure comprises 344 residues: Heat-inducible transcription repressor HrcA (344 aa).

Belongs to the HrcA family.

Negative regulator of class I heat shock genes (grpE-dnaK-dnaJ and groELS operons). Prevents heat-shock induction of these operons. The protein is Heat-inducible transcription repressor HrcA of Streptococcus pneumoniae (strain P1031).